The chain runs to 463 residues: MALSCTLNRYLLLMAQEHLEFRLPEIKSLLLLFGGQFASSQETYGKSPFWILSIPSEDIARNLMKRTVCAKSIFELWGHGQSPEELYSSLKNYPVEKMVPFLHSDSTYKIKIHTFNKTLTQEEKIKRIDALEFLPFEGKVNLKKPQHVFSVLEDYGLDPNCIPENPHNIYFGRWIADGQRELIESYSVKKRHFIGNTSMDAGLSFIMANHGKVKENDIVFDPFVGTGGLLIACAHFGAYVYGTDIDYNTVHGLGKATRKNQKWRGPDENIRANLRQYGLEKYYLDVLVSDASKPSWRKGTYFDAIITDPPYGIRESTRRTGSQKEIPKGIEKWEKCPESHVPVSLSYHLSDMFLDLLNFAAETLVLGGRLVYWLPVYTPEYTEEMVPWHPCLELVSNCEQKLSSHTSRRLITMEKVKKFENRDQYSHLLSDHFLPYQGHNSFREKYFSGVTKRIAKEEKSTQE.

At A2 the chain carries N-acetylalanine.

It belongs to the class I-like SAM-binding methyltransferase superfamily. TRM11 methyltransferase family. Part of the heterodimeric TRMT11-TRM112 methyltransferase complex; this complex forms an active tRNA methyltransferase, where TRMT112 acts as an activator of the catalytic subunit TRMT11.

The protein resides in the cytoplasm. It carries out the reaction guanosine(10) in tRNA + S-adenosyl-L-methionine = N(2)-methylguanosine(10) in tRNA + S-adenosyl-L-homocysteine + H(+). Functionally, catalytic subunit of the TRMT11-TRM112 methyltransferase complex, that specifically mediates the S-adenosyl-L-methionine-dependent N(2)-methylation of guanosine nucleotide at position 10 (m2G10) in tRNAs. This is one of the major tRNA (guanine-N(2))-methyltransferases. This Homo sapiens (Human) protein is tRNA (guanine(10)-N(2))-methyltransferase TRMT11.